The following is a 136-amino-acid chain: UPF0216 protein PYRAB16100 (136 aa).

Belongs to the UPF0216 family.

This chain is UPF0216 protein PYRAB16100, found in Pyrococcus abyssi (strain GE5 / Orsay).